We begin with the raw amino-acid sequence, 384 residues long: 1-deoxy-D-xylulose 5-phosphate reductoisomerase (384 aa).

Positions 11, 12, 13, 14, 38, and 123 each coordinate NADPH. Lys-124 lines the 1-deoxy-D-xylulose 5-phosphate pocket. NADPH is bound at residue Glu-125. Asp-148 is a Mn(2+) binding site. Residues Ser-149, Glu-150, Ser-174, and His-197 each contribute to the 1-deoxy-D-xylulose 5-phosphate site. Residue Glu-150 coordinates Mn(2+). Gly-203 lines the NADPH pocket. Residues Ser-210, Asn-215, Lys-216, and Glu-219 each coordinate 1-deoxy-D-xylulose 5-phosphate. Residue Glu-219 coordinates Mn(2+).

This sequence belongs to the DXR family. Requires Mg(2+) as cofactor. Mn(2+) serves as cofactor.

It carries out the reaction 2-C-methyl-D-erythritol 4-phosphate + NADP(+) = 1-deoxy-D-xylulose 5-phosphate + NADPH + H(+). Its pathway is isoprenoid biosynthesis; isopentenyl diphosphate biosynthesis via DXP pathway; isopentenyl diphosphate from 1-deoxy-D-xylulose 5-phosphate: step 1/6. Catalyzes the NADPH-dependent rearrangement and reduction of 1-deoxy-D-xylulose-5-phosphate (DXP) to 2-C-methyl-D-erythritol 4-phosphate (MEP). This Halothermothrix orenii (strain H 168 / OCM 544 / DSM 9562) protein is 1-deoxy-D-xylulose 5-phosphate reductoisomerase.